Here is a 530-residue protein sequence, read N- to C-terminus: Meiosis 1 arrest protein (530 aa).

The segment at 463–530 (LHPHWESRAP…SEWEKDPSRP (68 aa)) is disordered. Residues 503–516 (ASKMPAASKSSSDA) show a composition bias toward low complexity.

It is found in the cytoplasm. In terms of biological role, required for meiosis I progression during spermatogenesis. In Homo sapiens (Human), this protein is Meiosis 1 arrest protein (M1AP).